The sequence spans 662 residues: UvrABC system protein B (662 aa).

The region spanning 31 to 188 (DNIEGGEKAQ…NDLVDIQFER (158 aa)) is the Helicase ATP-binding domain. ATP is bound at residue 44–51 (GATGTGKT). The Beta-hairpin motif lies at 97–120 (YYDYYQPEAYVPSSDTYIEKDSSV). Positions 435–601 (QIDDLLGEIN…TIKKEIRDLI (167 aa)) constitute a Helicase C-terminal domain. The 36-residue stretch at 626–661 (KELVKKLEKQMQEAVEVLDFELAAQIRDMMLEVKAL) folds into the UVR domain.

The protein belongs to the UvrB family. As to quaternary structure, forms a heterotetramer with UvrA during the search for lesions. Interacts with UvrC in an incision complex.

The protein resides in the cytoplasm. The UvrABC repair system catalyzes the recognition and processing of DNA lesions. A damage recognition complex composed of 2 UvrA and 2 UvrB subunits scans DNA for abnormalities. Upon binding of the UvrA(2)B(2) complex to a putative damaged site, the DNA wraps around one UvrB monomer. DNA wrap is dependent on ATP binding by UvrB and probably causes local melting of the DNA helix, facilitating insertion of UvrB beta-hairpin between the DNA strands. Then UvrB probes one DNA strand for the presence of a lesion. If a lesion is found the UvrA subunits dissociate and the UvrB-DNA preincision complex is formed. This complex is subsequently bound by UvrC and the second UvrB is released. If no lesion is found, the DNA wraps around the other UvrB subunit that will check the other stand for damage. This chain is UvrABC system protein B, found in Streptococcus pneumoniae serotype 2 (strain D39 / NCTC 7466).